Consider the following 200-residue polypeptide: Holliday junction branch migration complex subunit RuvA (200 aa).

Residues 1–64 (MLSYLSGTLI…EDALQLYGFI (64 aa)) are domain I. The tract at residues 65–143 (TTEDREVFKL…KLDLKIDIKE (79 aa)) is domain II. A flexible linker region spans residues 144 to 148 (TAFRS). The tract at residues 149-200 (DKQQVRNDAYSALISLGFTKSIAEKAMRAAIAEVPDGSVDDLIRVALRHVQS) is domain III.

This sequence belongs to the RuvA family. In terms of assembly, homotetramer. Forms an RuvA(8)-RuvB(12)-Holliday junction (HJ) complex. HJ DNA is sandwiched between 2 RuvA tetramers; dsDNA enters through RuvA and exits via RuvB. An RuvB hexamer assembles on each DNA strand where it exits the tetramer. Each RuvB hexamer is contacted by two RuvA subunits (via domain III) on 2 adjacent RuvB subunits; this complex drives branch migration. In the full resolvosome a probable DNA-RuvA(4)-RuvB(12)-RuvC(2) complex forms which resolves the HJ.

The protein resides in the cytoplasm. In terms of biological role, the RuvA-RuvB-RuvC complex processes Holliday junction (HJ) DNA during genetic recombination and DNA repair, while the RuvA-RuvB complex plays an important role in the rescue of blocked DNA replication forks via replication fork reversal (RFR). RuvA specifically binds to HJ cruciform DNA, conferring on it an open structure. The RuvB hexamer acts as an ATP-dependent pump, pulling dsDNA into and through the RuvAB complex. HJ branch migration allows RuvC to scan DNA until it finds its consensus sequence, where it cleaves and resolves the cruciform DNA. The sequence is that of Holliday junction branch migration complex subunit RuvA from Chloroherpeton thalassium (strain ATCC 35110 / GB-78).